We begin with the raw amino-acid sequence, 548 residues long: CBS domain-containing protein CBSCBSPB4 (548 aa).

Residues 1–18 (MANQGGPSRKSLSFSGHS) show a composition bias toward polar residues. The segment at 1 to 58 (MANQGGPSRKSLSFSGHSFQGRKKASENEGGGGGGSDLLPRRSLTSSRSSISLSGERS) is disordered. Position 18 is a phosphoserine (Ser18). Low complexity predominate over residues 37 to 56 (DLLPRRSLTSSRSSISLSGE). 4 CBS domains span residues 63 to 126 (VKRL…NLEE), 133 to 190 (MTKN…ERSV), 233 to 293 (IIPE…LPQE), and 301 to 358 (MTPN…AGST). The PB1 domain occupies 411–498 (PNTFAFKLQD…KGLKLHLDYT (88 aa)). A helical transmembrane segment spans residues 521–543 (AAAYKTVAAGAALAAGLGVLVYL).

The protein localises to the membrane. This Arabidopsis thaliana (Mouse-ear cress) protein is CBS domain-containing protein CBSCBSPB4 (CBSCBSPB4).